The chain runs to 542 residues: uncharacterized protein (542 aa).

Positions 256–275 (KKSTTTSSPPITTTHLSKPE) are disordered. Residues 258–269 (STTTSSPPITTT) are compositionally biased toward low complexity.

This is an uncharacterized protein from Caenorhabditis elegans.